The primary structure comprises 154 residues: NADPH-dependent 7-cyano-7-deazaguanine reductase (154 aa).

Residues 1-13 show a composition bias toward polar residues; the sequence is MSKTDVSGLSQLG. The tract at residues 1–24 is disordered; sequence MSKTDVSGLSQLGRQVDAPTSPET. C52 acts as the Thioimide intermediate in catalysis. The active-site Proton donor is D59. Substrate is bound by residues 74-76 and 93-94; these read VES and HE.

The protein belongs to the GTP cyclohydrolase I family. QueF type 1 subfamily.

It is found in the cytoplasm. It carries out the reaction 7-aminomethyl-7-carbaguanine + 2 NADP(+) = 7-cyano-7-deazaguanine + 2 NADPH + 3 H(+). The protein operates within tRNA modification; tRNA-queuosine biosynthesis. Its function is as follows. Catalyzes the NADPH-dependent reduction of 7-cyano-7-deazaguanine (preQ0) to 7-aminomethyl-7-deazaguanine (preQ1). This is NADPH-dependent 7-cyano-7-deazaguanine reductase from Allorhizobium ampelinum (strain ATCC BAA-846 / DSM 112012 / S4) (Agrobacterium vitis (strain S4)).